Here is a 95-residue protein sequence, read N- to C-terminus: Co-chaperonin GroES (95 aa).

Belongs to the GroES chaperonin family. As to quaternary structure, heptamer of 7 subunits arranged in a ring. Interacts with the chaperonin GroEL.

It is found in the cytoplasm. Together with the chaperonin GroEL, plays an essential role in assisting protein folding. The GroEL-GroES system forms a nano-cage that allows encapsulation of the non-native substrate proteins and provides a physical environment optimized to promote and accelerate protein folding. GroES binds to the apical surface of the GroEL ring, thereby capping the opening of the GroEL channel. This Maricaulis maris (strain MCS10) (Caulobacter maris) protein is Co-chaperonin GroES.